The primary structure comprises 141 residues: MAIERTLSIIKPDAVAKNVIGQIYSRFEGAGLKIVASRMAHLSRGDAEKFYAVHAARPFFKDLVDFMISGPVMIQVLEGEGAILKNRDLMGATDPKKAEKGTIRADFADSIDANAVHGSDAAETAAVEIAFFFPEMNVYSR.

Positions 11, 59, 87, 93, 104, and 114 each coordinate ATP. His117 acts as the Pros-phosphohistidine intermediate in catalysis.

Belongs to the NDK family. In terms of assembly, homotetramer. Requires Mg(2+) as cofactor.

Its subcellular location is the cytoplasm. The enzyme catalyses a 2'-deoxyribonucleoside 5'-diphosphate + ATP = a 2'-deoxyribonucleoside 5'-triphosphate + ADP. It carries out the reaction a ribonucleoside 5'-diphosphate + ATP = a ribonucleoside 5'-triphosphate + ADP. Functionally, major role in the synthesis of nucleoside triphosphates other than ATP. The ATP gamma phosphate is transferred to the NDP beta phosphate via a ping-pong mechanism, using a phosphorylated active-site intermediate. The chain is Nucleoside diphosphate kinase from Burkholderia ambifaria (strain MC40-6).